The sequence spans 85 residues: Arminin 524 (85 aa).

Positions Met-1–Ala-18 are cleaved as a signal peptide. Positions Lys-19–Ala-57 are excised as a propeptide. The residue at position 82 (Ala-82) is an Alanine amide.

It belongs to the arminin family. As to expression, expressed in entodermal epithelium along the body column.

The protein localises to the secreted. It localises to the target cell membrane. Functionally, antimicrobial peptide with a broad-spectrum antimicrobial activity. Keeps its antibacterial activity under a wide range of salt concentrations that mimic physiological conditions of human blood, which is surprising, since Hydra is an obligate freshwater animal with nearly no salt tolerance. Does not affect red blood cells. The protein is Arminin 524 of Hydra oligactis (Brown hydra).